Reading from the N-terminus, the 393-residue chain is Acetyl-CoA acetyltransferase (393 aa).

The active-site Acyl-thioester intermediate is Cys90. Residues His349 and Cys379 each act as proton acceptor in the active site.

Belongs to the thiolase-like superfamily. Thiolase family. As to quaternary structure, homotetramer.

It is found in the cytoplasm. The catalysed reaction is 2 acetyl-CoA = acetoacetyl-CoA + CoA. Its pathway is biopolymer metabolism; poly-(R)-3-hydroxybutanoate biosynthesis. It functions in the pathway metabolic intermediate biosynthesis; (R)-mevalonate biosynthesis; (R)-mevalonate from acetyl-CoA: step 1/3. The sequence is that of Acetyl-CoA acetyltransferase from Rhizobium meliloti (strain 1021) (Ensifer meliloti).